A 376-amino-acid chain; its full sequence is Succinyl-diaminopimelate desuccinylase (376 aa).

H67 contributes to the Zn(2+) binding site. D69 is a catalytic residue. Residue D100 participates in Zn(2+) binding. Residue E134 is the Proton acceptor of the active site. Zn(2+) contacts are provided by E135, E163, and H349.

Belongs to the peptidase M20A family. DapE subfamily. Homodimer. It depends on Zn(2+) as a cofactor. Co(2+) serves as cofactor.

It catalyses the reaction N-succinyl-(2S,6S)-2,6-diaminopimelate + H2O = (2S,6S)-2,6-diaminopimelate + succinate. It participates in amino-acid biosynthesis; L-lysine biosynthesis via DAP pathway; LL-2,6-diaminopimelate from (S)-tetrahydrodipicolinate (succinylase route): step 3/3. Catalyzes the hydrolysis of N-succinyl-L,L-diaminopimelic acid (SDAP), forming succinate and LL-2,6-diaminopimelate (DAP), an intermediate involved in the bacterial biosynthesis of lysine and meso-diaminopimelic acid, an essential component of bacterial cell walls. The sequence is that of Succinyl-diaminopimelate desuccinylase from Xanthomonas campestris pv. campestris (strain 8004).